Here is a 345-residue protein sequence, read N- to C-terminus: Esterase (345 aa).

The signal sequence occupies residues 1–39 (MSSAMRKTTNSPVVRRLTAAAVALGSCLALAGPAGSAGA). Intrachain disulfides connect C73–C103, C156–C180, and C236–C294.

Its subcellular location is the secreted. The sequence is that of Esterase (estA) from Streptomyces scabiei.